The following is a 99-amino-acid chain: MRIGVVGDPDVVVGFRLAGLTDVYEVKSPEQAAKAIEELNSNSEIGLIITTERIGEEIRDTISGVKKVVVEVPDKNGPIVRENDPVKVLVRNAVGVDIK.

Belongs to the V-ATPase F subunit family. Has multiple subunits with at least A(3), B(3), C, D, E, F, H, I and proteolipid K(x).

The protein resides in the cell membrane. In terms of biological role, component of the A-type ATP synthase that produces ATP from ADP in the presence of a proton gradient across the membrane. This chain is A-type ATP synthase subunit F, found in Methanococcus maripaludis (strain C7 / ATCC BAA-1331).